The chain runs to 766 residues: 5-methyltetrahydropteroyltriglutamate--homocysteine methyltransferase (766 aa).

5-methyltetrahydropteroyltri-L-glutamate-binding positions include 16–19 (RELK) and lysine 124. Residues 445–447 (IGS) and glutamate 498 contribute to the L-homocysteine site. L-methionine-binding positions include 445-447 (IGS) and glutamate 498. 5-methyltetrahydropteroyltri-L-glutamate contacts are provided by residues 529–530 (RC) and tryptophan 575. Residue aspartate 613 participates in L-homocysteine binding. Aspartate 613 contributes to the L-methionine binding site. Glutamate 619 contacts 5-methyltetrahydropteroyltri-L-glutamate. Residues histidine 655, cysteine 657, and glutamate 679 each coordinate Zn(2+). Histidine 708 acts as the Proton donor in catalysis. Cysteine 740 serves as a coordination point for Zn(2+).

This sequence belongs to the vitamin-B12 independent methionine synthase family. Zn(2+) is required as a cofactor.

It carries out the reaction 5-methyltetrahydropteroyltri-L-glutamate + L-homocysteine = tetrahydropteroyltri-L-glutamate + L-methionine. The protein operates within amino-acid biosynthesis; L-methionine biosynthesis via de novo pathway; L-methionine from L-homocysteine (MetE route): step 1/1. Its function is as follows. Catalyzes the transfer of a methyl group from 5-methyltetrahydrofolate to homocysteine resulting in methionine formation. The chain is 5-methyltetrahydropteroyltriglutamate--homocysteine methyltransferase from Pseudomonas syringae pv. tomato (strain ATCC BAA-871 / DC3000).